The primary structure comprises 1251 residues: MSTERDSETTFDEESQPNDEVVPYSDDETEDELEDQGSTVEPEQNRVNREAEKKRETFRKDCTWQVKANDRKFHEQPHFMNTKFFCIKESKYASNAIKTYKYNGFTFLPMNLFEQFKRAANFYFLILLILQAIPQISTLAWYTTLVPLLLVLGITAIKDLVDDVARHKMDKEINNRTCEVIKDGRFKIIKWKDIQVGDVIRLKKNDFIPADILLLSSSEPNSLCYVETAELDGETNLKFKMALEITDQYLQIEDNLATFDGFIECEEPNNRLDKFTGTLFWKNQSFPLDADKILLRGCVIRNTDVCHGLVIFAGADTKIMKNSGKTRFKRTKIDYLMNYMVYTIFIVLILVSAGLAIGHAYWEAQVGNYSWYLYDGENATPSYRGFLNFWGYIIVLNTMVPISLYVSVEVIRLGQSHFINWDLQMYYAEKDTPAKARTTTLNEQLGQIHYIFSDKTGTLTQNIMTFKKCCINGTIYGDHRDASQHSHSKIELVDFSWNTFADGKLAFYDHYLIEQIQSGKEPEVRQFFFLLSICHTVMVDRIDGQINYQAASPDEGALVNAARNFGFAFLARTQNTITVSELGSERTYNVLAILDFNSDRKRMSIIVRTPEGSIRLYCKGADTVIYERLHRMNPTKQETQDALDIFASETLRTLCLCYKEIEEKEFTEWNNKFMAASVASSNRDEALDKVYEEIEKDLILLGATAIEDKLQDGVPETISKLAKADIKIWVLTGDKKETAENIGFACELLTEDTTICYGEDINSLLHTRMENQRNRGGVSAKFAPPVYEPFFPPGENRALIITGSWLNEILLEKKTKRSKILKLKFPRTEEERRMRSQSRRRLEEKKEQRQKNFVDLACECSAVICCRVTPKQKAMVVDLVKRYKKAITLAIGDGANDVNMIKTAHIGVGISGQEGMQAVMSSDYSFAQFRYLQRLLLVHGRWSYIRMCKFLRYFFYKNFAFTLVHFWYSFFNGYSAQTAYEDWFITLYNVLYSSLPVLLMGLLDQDVSDKLSLRFPGLYVVGQRDLLFNYKRFFVSLLHGVLTSMVLFFIPLGAYLQTVGQDGEAPSDYQSFAVTVASALVITVNFQIGLDTSYWTFVNAFSIFGSIALYFGIMFDFHSAGIHVLFPSAFQFTGTASNALRQPYIWLTIILTVAVCLLPVVAIRFLSMTIWPSESDKIQKHRKRLKAEEQWKRRQSVFRRGVSSRRSAYAFSHQRGYADLISSGRSIRKKRSPLDAIIADGTAEYRRTVES.

The disordered stretch occupies residues 1 to 52 (MSTERDSETTFDEESQPNDEVVPYSDDETEDELEDQGSTVEPEQNRVNREAE). At 1 to 121 (MSTERDSETT…LFEQFKRAAN (121 aa)) the chain is on the cytoplasmic side. Positions 25–35 (SDDETEDELED) are enriched in acidic residues. The segment covering 43–52 (EQNRVNREAE) has biased composition (basic and acidic residues). The chain crosses the membrane as a helical span at residues 122-142 (FYFLILLILQAIPQISTLAWY). The Exoplasmic loop segment spans residues 143–144 (TT). Residues 145–165 (LVPLLLVLGITAIKDLVDDVA) form a helical membrane-spanning segment. The Cytoplasmic segment spans residues 166 to 339 (RHKMDKEINN…RTKIDYLMNY (174 aa)). A helical membrane pass occupies residues 340–360 (MVYTIFIVLILVSAGLAIGHA). The Exoplasmic loop portion of the chain corresponds to 361-385 (YWEAQVGNYSWYLYDGENATPSYRG). A helical membrane pass occupies residues 386–406 (FLNFWGYIIVLNTMVPISLYV). Topologically, residues 407 to 952 (SVEVIRLGQS…SYIRMCKFLR (546 aa)) are cytoplasmic. Asp454 serves as the catalytic 4-aspartylphosphate intermediate. ATP is bound by residues Asp454, Lys455, Thr456, Glu555, Phe596, Lys619, Arg652, Thr732, Gly733, Asp734, Arg867, and Lys873. Asp454 provides a ligand contact to Mg(2+). Residue Thr456 participates in Mg(2+) binding. Asp893 contributes to the Mg(2+) binding site. ATP is bound by residues Asn896 and Asp897. Asp897 provides a ligand contact to Mg(2+). A helical transmembrane segment spans residues 953-973 (YFFYKNFAFTLVHFWYSFFNG). Residues 974–982 (YSAQTAYED) are Exoplasmic loop-facing. The chain crosses the membrane as a helical span at residues 983–1003 (WFITLYNVLYSSLPVLLMGLL). Residues 1004–1032 (DQDVSDKLSLRFPGLYVVGQRDLLFNYKR) lie on the Cytoplasmic side of the membrane. Residues 1033-1053 (FFVSLLHGVLTSMVLFFIPLG) traverse the membrane as a helical segment. The Exoplasmic loop portion of the chain corresponds to 1054–1071 (AYLQTVGQDGEAPSDYQS). The helical transmembrane segment at 1072 to 1092 (FAVTVASALVITVNFQIGLDT) threads the bilayer. Over 1093-1094 (SY) the chain is Cytoplasmic. The chain crosses the membrane as a helical span at residues 1095-1115 (WTFVNAFSIFGSIALYFGIMF). Residues 1116–1142 (DFHSAGIHVLFPSAFQFTGTASNALRQ) lie on the Exoplasmic loop side of the membrane. A helical membrane pass occupies residues 1143–1163 (PYIWLTIILTVAVCLLPVVAI). Residues 1164–1251 (RFLSMTIWPS…TAEYRRTVES (88 aa)) lie on the Cytoplasmic side of the membrane. Ser1223 is modified (phosphoserine).

This sequence belongs to the cation transport ATPase (P-type) (TC 3.A.3) family. Type IV subfamily. Component of a P4-ATPase flippase complex which consists of a catalytic alpha subunit ATP8B1 and an accessory beta subunit TMEM30A. The flippase ATP8B1:TMEM30A complex can form an intermediate phosphoenzyme in vitro. Also interacts with beta subunit TMEM30B. Mg(2+) serves as cofactor. In terms of tissue distribution, hepatocytes, bile duct, intestinal epithelial cells (cholangiocytes and ileocytes), and pancreatic acinar cells.

The protein localises to the cell membrane. It is found in the apical cell membrane. Its subcellular location is the cell projection. The protein resides in the stereocilium. It localises to the endoplasmic reticulum. The protein localises to the golgi apparatus. It carries out the reaction ATP + H2O + phospholipidSide 1 = ADP + phosphate + phospholipidSide 2.. It catalyses the reaction a 1,2-diacyl-sn-glycero-3-phosphocholine(out) + ATP + H2O = a 1,2-diacyl-sn-glycero-3-phosphocholine(in) + ADP + phosphate + H(+). The catalysed reaction is a 1,2-diacyl-sn-glycero-3-phospho-L-serine(out) + ATP + H2O = a 1,2-diacyl-sn-glycero-3-phospho-L-serine(in) + ADP + phosphate + H(+). Its function is as follows. Catalytic component of a P4-ATPase flippase complex which catalyzes the hydrolysis of ATP coupled to the transport of phospholipids, in particular phosphatidylcholines (PC), from the outer to the inner leaflet of the plasma membrane. May participate in the establishment of the canalicular membrane integrity by ensuring asymmetric distribution of phospholipids in the canicular membrane. Thus may have a role in the regulation of bile acids transport into the canaliculus, uptake of bile acids from intestinal contents into intestinal mucosa or both and protect hepatocytes from bile salts. Involved in the microvillus formation in polarized epithelial cells; the function seems to be independent from its flippase activity. Participates in correct apical membrane localization of CDC42, CFTR and SLC10A2. Enables CDC42 clustering at the apical membrane during enterocyte polarization through the interaction between CDC42 polybasic region and negatively charged membrane lipids provided by ATP8B1. Together with TMEM30A is involved in uptake of the synthetic drug alkylphospholipid perifosine. Required for the preservation of cochlear hair cells in the inner ear. According PubMed:20852622 is proposed to act as cardiolipin transporter during inflammatory injury; the function is questioned by PubMed:21475228. The polypeptide is Phospholipid-transporting ATPase IC (Mus musculus (Mouse)).